The sequence spans 181 residues: Oligoribonuclease (181 aa).

Residues 8-171 (LIWLDLEMTG…DDIKDSIMEL (164 aa)) enclose the Exonuclease domain. The active site involves Tyr-129.

Belongs to the oligoribonuclease family.

It is found in the cytoplasm. Functionally, 3'-to-5' exoribonuclease specific for small oligoribonucleotides. The polypeptide is Oligoribonuclease (Pseudoalteromonas translucida (strain TAC 125)).